The following is a 181-amino-acid chain: ATP-dependent protease subunit HslV (181 aa).

The active site involves threonine 5. The Na(+) site is built by serine 162, cysteine 165, and threonine 168.

The protein belongs to the peptidase T1B family. HslV subfamily. As to quaternary structure, a double ring-shaped homohexamer of HslV is capped on each side by a ring-shaped HslU homohexamer. The assembly of the HslU/HslV complex is dependent on binding of ATP.

It is found in the cytoplasm. The enzyme catalyses ATP-dependent cleavage of peptide bonds with broad specificity.. Its activity is regulated as follows. Allosterically activated by HslU binding. Its function is as follows. Protease subunit of a proteasome-like degradation complex believed to be a general protein degrading machinery. The polypeptide is ATP-dependent protease subunit HslV (Campylobacter hominis (strain ATCC BAA-381 / DSM 21671 / CCUG 45161 / LMG 19568 / NCTC 13146 / CH001A)).